Consider the following 145-residue polypeptide: Transcriptional regulator MraZ (145 aa).

2 consecutive SpoVT-AbrB domains span residues 5–50 and 81–124; these read TFNH…ALPQ and AHEV…DRAA.

It belongs to the MraZ family. In terms of assembly, forms oligomers.

It localises to the cytoplasm. The protein resides in the nucleoid. The polypeptide is Transcriptional regulator MraZ (Anaeromyxobacter dehalogenans (strain 2CP-1 / ATCC BAA-258)).